A 352-amino-acid polypeptide reads, in one-letter code: Biotin synthase (352 aa).

Residues 44–262 (NRVQVSTLLS…LAVARILMPK (219 aa)) enclose the Radical SAM core domain. [4Fe-4S] cluster-binding residues include cysteine 59, cysteine 63, and cysteine 66. Residues cysteine 103, cysteine 134, cysteine 194, and arginine 266 each coordinate [2Fe-2S] cluster.

Belongs to the radical SAM superfamily. Biotin synthase family. Homodimer. It depends on [4Fe-4S] cluster as a cofactor. [2Fe-2S] cluster is required as a cofactor.

The enzyme catalyses (4R,5S)-dethiobiotin + (sulfur carrier)-SH + 2 reduced [2Fe-2S]-[ferredoxin] + 2 S-adenosyl-L-methionine = (sulfur carrier)-H + biotin + 2 5'-deoxyadenosine + 2 L-methionine + 2 oxidized [2Fe-2S]-[ferredoxin]. It functions in the pathway cofactor biosynthesis; biotin biosynthesis; biotin from 7,8-diaminononanoate: step 2/2. Functionally, catalyzes the conversion of dethiobiotin (DTB) to biotin by the insertion of a sulfur atom into dethiobiotin via a radical-based mechanism. This is Biotin synthase from Pseudomonas syringae pv. syringae (strain B728a).